A 405-amino-acid polypeptide reads, in one-letter code: L-carnitine CoA-transferase (405 aa).

The CoA site is built by K97 and R104. Residue D169 is the Nucleophile of the active site.

The protein belongs to the CoA-transferase III family. CaiB subfamily. Homodimer.

Its subcellular location is the cytoplasm. It carries out the reaction crotonobetainyl-CoA + (R)-carnitine = crotonobetaine + (R)-carnitinyl-CoA. It catalyses the reaction 4-(trimethylamino)butanoyl-CoA + (R)-carnitine = (R)-carnitinyl-CoA + 4-(trimethylamino)butanoate. Its pathway is amine and polyamine metabolism; carnitine metabolism. In terms of biological role, catalyzes the reversible transfer of the CoA moiety from gamma-butyrobetainyl-CoA to L-carnitine to generate L-carnitinyl-CoA and gamma-butyrobetaine. Is also able to catalyze the reversible transfer of the CoA moiety from gamma-butyrobetainyl-CoA or L-carnitinyl-CoA to crotonobetaine to generate crotonobetainyl-CoA. The protein is L-carnitine CoA-transferase of Salmonella enteritidis PT4 (strain P125109).